A 385-amino-acid polypeptide reads, in one-letter code: Heptahelical transmembrane protein 4 (385 aa).

Residues 1 to 12 (MGDEAEIKEHLK) show a composition bias toward basic and acidic residues. The disordered stretch occupies residues 1–22 (MGDEAEIKEHLKPQASSETMDK). The Cytoplasmic segment spans residues 1–79 (MGDEAEIKEH…LSIFTIHNET (79 aa)). The helical transmembrane segment at 80-100 (LNVWTHLIGFFLFLALTIYTA) threads the bilayer. Topologically, residues 101-191 (TKVPSVVDLH…LIFRPITRWP (91 aa)) are extracellular. A helical membrane pass occupies residues 192 to 212 (FYAFLGGAMFCLLASSTCHLL). Residues 213–228 (SCHSERVSYIMLRLDY) lie on the Cytoplasmic side of the membrane. A helical membrane pass occupies residues 229-249 (AGIAALIATSFYPPVYYSFMC). Residues 250–256 (DPFFCNL) are Extracellular-facing. Residues 257-277 (YLGFITILGIATVLVSLLPVF) traverse the membrane as a helical segment. Topologically, residues 278-288 (QSPEFRVVRAS) are cytoplasmic. A helical membrane pass occupies residues 289–309 (LFFGMGFSGLAPILHKLIIFW). Residues 310–313 (DQPE) lie on the Extracellular side of the membrane. Residues 314–334 (ALHTTGYEILMGLLYGLGALV) traverse the membrane as a helical segment. The Cytoplasmic segment spans residues 335-356 (YATRIPERWMPGKFDIAGHSHQ). The chain crosses the membrane as a helical span at residues 357-377 (LFHVLVVAGAFTHYRAGLVYL).

The protein belongs to the ADIPOR family. In terms of tissue distribution, expressed in roots, leaves, stems and flowers.

The protein resides in the membrane. In terms of biological role, may play a role in abiotic stress response. This is Heptahelical transmembrane protein 4 (HHP4) from Arabidopsis thaliana (Mouse-ear cress).